Consider the following 505-residue polypeptide: Glutamyl-tRNA(Gln) amidotransferase subunit B, mitochondrial (505 aa).

It belongs to the GatB/GatE family. GatB subfamily. Subunit of the heterotrimeric GatCAB amidotransferase (AdT) complex, composed of A, B and C subunits.

The protein localises to the mitochondrion. It catalyses the reaction L-glutamyl-tRNA(Gln) + L-glutamine + ATP + H2O = L-glutaminyl-tRNA(Gln) + L-glutamate + ADP + phosphate + H(+). Its function is as follows. Allows the formation of correctly charged Gln-tRNA(Gln) through the transamidation of misacylated Glu-tRNA(Gln) in the mitochondria. The reaction takes place in the presence of glutamine and ATP through an activated gamma-phospho-Glu-tRNA(Gln). The polypeptide is Glutamyl-tRNA(Gln) amidotransferase subunit B, mitochondrial (Schizosaccharomyces japonicus (strain yFS275 / FY16936) (Fission yeast)).